We begin with the raw amino-acid sequence, 346 residues long: Protein Spea_1705 (346 aa).

Residue cysteine 101 is the Proton acceptor of the active site. Residues 102-103, aspartate 262, and 267-268 each bind substrate; these read GH and GT.

The protein belongs to the proline racemase family.

It carries out the reaction trans-3-hydroxy-L-proline = 1-pyrroline-2-carboxylate + H2O. Its function is as follows. In vitro, catalyzes the dehydration of trans-3-hydroxy-L-proline (t3LHyp) to Delta(1)-pyrroline-2-carboxylate (Pyr2C), albeit with very low efficiency. The physiological substrate may be different. Displays neither trans-4-hydroxy-L-proline (t4LHyp) epimerase nor proline racemase activity. The sequence is that of Protein Spea_1705 from Shewanella pealeana (strain ATCC 700345 / ANG-SQ1).